The primary structure comprises 404 residues: S-adenosylmethionine synthase (404 aa).

Residues methionine 1–valine 13 are compositionally biased toward polar residues. Residues methionine 1–lysine 20 form a disordered region. Residue histidine 17 coordinates ATP. Position 19 (aspartate 19) interacts with Mg(2+). Glutamate 45 is a binding site for K(+). L-methionine is bound by residues glutamate 58 and glutamine 101. The tract at residues glutamine 101–arginine 111 is flexible loop. Residues aspartate 172–lysine 174, arginine 246–phenylalanine 247, aspartate 255, arginine 261–lysine 262, alanine 278, and lysine 282 each bind ATP. Aspartate 255 serves as a coordination point for L-methionine. Lysine 286 lines the L-methionine pocket.

This sequence belongs to the AdoMet synthase family. In terms of assembly, homotetramer; dimer of dimers. Requires Mg(2+) as cofactor. K(+) serves as cofactor.

It is found in the cytoplasm. The enzyme catalyses L-methionine + ATP + H2O = S-adenosyl-L-methionine + phosphate + diphosphate. It functions in the pathway amino-acid biosynthesis; S-adenosyl-L-methionine biosynthesis; S-adenosyl-L-methionine from L-methionine: step 1/1. In terms of biological role, catalyzes the formation of S-adenosylmethionine (AdoMet) from methionine and ATP. The overall synthetic reaction is composed of two sequential steps, AdoMet formation and the subsequent tripolyphosphate hydrolysis which occurs prior to release of AdoMet from the enzyme. The sequence is that of S-adenosylmethionine synthase from Chlorobaculum parvum (strain DSM 263 / NCIMB 8327) (Chlorobium vibrioforme subsp. thiosulfatophilum).